Consider the following 280-residue polypeptide: Pantothenate synthetase (280 aa).

26-33 (MGNLHEGH) is a binding site for ATP. Histidine 33 acts as the Proton donor in catalysis. Position 57 (glutamine 57) interacts with (R)-pantoate. Position 57 (glutamine 57) interacts with beta-alanine. 145–148 (GKKD) lines the ATP pocket. Residue glutamine 151 participates in (R)-pantoate binding. ATP is bound by residues valine 174 and 182–185 (LSSR).

It belongs to the pantothenate synthetase family. As to quaternary structure, homodimer.

The protein localises to the cytoplasm. It catalyses the reaction (R)-pantoate + beta-alanine + ATP = (R)-pantothenate + AMP + diphosphate + H(+). It participates in cofactor biosynthesis; (R)-pantothenate biosynthesis; (R)-pantothenate from (R)-pantoate and beta-alanine: step 1/1. Functionally, catalyzes the condensation of pantoate with beta-alanine in an ATP-dependent reaction via a pantoyl-adenylate intermediate. In Bordetella bronchiseptica (strain ATCC BAA-588 / NCTC 13252 / RB50) (Alcaligenes bronchisepticus), this protein is Pantothenate synthetase.